The chain runs to 533 residues: Glucose-6-phosphate isomerase (533 aa).

Glutamate 330 functions as the Proton donor in the catalytic mechanism. Catalysis depends on residues histidine 359 and lysine 461.

The protein belongs to the GPI family.

It is found in the cytoplasm. The enzyme catalyses alpha-D-glucose 6-phosphate = beta-D-fructose 6-phosphate. It participates in carbohydrate biosynthesis; gluconeogenesis. The protein operates within carbohydrate degradation; glycolysis; D-glyceraldehyde 3-phosphate and glycerone phosphate from D-glucose: step 2/4. Functionally, catalyzes the reversible isomerization of glucose-6-phosphate to fructose-6-phosphate. The sequence is that of Glucose-6-phosphate isomerase from Prochlorococcus marinus (strain SARG / CCMP1375 / SS120).